The chain runs to 170 residues: Flavodoxin (170 aa).

Residues 4-165 (IGLFFGTQTG…RIQAWVAQLK (162 aa)) enclose the Flavodoxin-like domain.

It belongs to the flavodoxin family. Requires FMN as cofactor.

In terms of biological role, low-potential electron donor to a number of redox enzymes. The chain is Flavodoxin (isiB) from Picosynechococcus sp. (strain ATCC 27264 / PCC 7002 / PR-6) (Agmenellum quadruplicatum).